We begin with the raw amino-acid sequence, 679 residues long: Penicillin-binding protein PbpB (679 aa).

Positions 1–74 (MSRAAPRRAS…STRARRTRQV (74 aa)) are disordered. Residues 1–90 (MSRAAPRRAS…GASFVFRHRT (90 aa)) are Cytoplasmic-facing. The segment covering 42 to 54 (ARQAQEATKSRPA) has biased composition (polar residues). A helical membrane pass occupies residues 91–111 (GNAVILVLMLVAATQLFFLQV). The Extracellular segment spans residues 112–679 (SHAAGLRAQA…PGPPLVLQAT (568 aa)). Ser386 serves as the catalytic Acyl-ester intermediate.

This sequence belongs to the transpeptidase family. As to quaternary structure, interacts with Wag31. Post-translationally, cleaved by Rip1 in response to oxidative stress (H(2)O(2)), prevented by Wag31. Cleavage probably occurs near residues 102-103.

It localises to the cell membrane. It functions in the pathway cell wall biogenesis; peptidoglycan biosynthesis. Its function is as follows. Synthesis of cross-linked peptidoglycan from the lipid intermediates. The chain is Penicillin-binding protein PbpB (pbpB) from Mycobacterium tuberculosis (strain ATCC 25618 / H37Rv).